A 369-amino-acid chain; its full sequence is Phosphoribosyl pyrophosphate synthase-associated protein 2 (369 aa).

N-acetylmethionine is present on M1. Phosphoserine is present on residues S219, S227, and S233.

It belongs to the ribose-phosphate pyrophosphokinase family. In terms of assembly, binds to PRPS1 and PRPS2.

In terms of biological role, seems to play a negative regulatory role in 5-phosphoribose 1-diphosphate synthesis. The polypeptide is Phosphoribosyl pyrophosphate synthase-associated protein 2 (PRPSAP2) (Bos taurus (Bovine)).